The chain runs to 218 residues: Capsid protein (218 aa).

Methionine 1 is modified (N-acetylmethionine; by host). Residues 1 to 29 (MDKSESTSAGRNHRRRPRRGSRSAPSSAD) form a disordered region. Residues 11-21 (RNHRRRPRRGS) are compositionally biased toward basic residues.

The protein belongs to the cucumovirus capsid protein family.

It localises to the virion. Its function is as follows. Capsid protein. Probably binds RNA and plays a role in packaging. The sequence is that of Capsid protein from Cucumber mosaic virus (strain C) (CMV).